We begin with the raw amino-acid sequence, 506 residues long: UDP-N-acetylmuramoyl-L-alanyl-D-glutamate--2,6-diaminopimelate ligase (506 aa).

Position 38 (serine 38) interacts with UDP-N-acetyl-alpha-D-muramoyl-L-alanyl-D-glutamate. 124 to 130 is an ATP binding site; that stretch reads GTNGKTS. UDP-N-acetyl-alpha-D-muramoyl-L-alanyl-D-glutamate contacts are provided by residues 166-167, serine 193, and arginine 201; that span reads TT. Lysine 233 carries the post-translational modification N6-carboxylysine. Residues arginine 401, 425–428, glycine 477, and glutamate 481 each bind meso-2,6-diaminopimelate; that span reads DNPR. The Meso-diaminopimelate recognition motif signature appears at 425–428; that stretch reads DNPR.

The protein belongs to the MurCDEF family. MurE subfamily. It depends on Mg(2+) as a cofactor. Carboxylation is probably crucial for Mg(2+) binding and, consequently, for the gamma-phosphate positioning of ATP.

The protein resides in the cytoplasm. The catalysed reaction is UDP-N-acetyl-alpha-D-muramoyl-L-alanyl-D-glutamate + meso-2,6-diaminopimelate + ATP = UDP-N-acetyl-alpha-D-muramoyl-L-alanyl-gamma-D-glutamyl-meso-2,6-diaminopimelate + ADP + phosphate + H(+). It functions in the pathway cell wall biogenesis; peptidoglycan biosynthesis. Its function is as follows. Catalyzes the addition of meso-diaminopimelic acid to the nucleotide precursor UDP-N-acetylmuramoyl-L-alanyl-D-glutamate (UMAG) in the biosynthesis of bacterial cell-wall peptidoglycan. The sequence is that of UDP-N-acetylmuramoyl-L-alanyl-D-glutamate--2,6-diaminopimelate ligase from Leptospira interrogans serogroup Icterohaemorrhagiae serovar copenhageni (strain Fiocruz L1-130).